The following is a 554-amino-acid chain: Terpene synthase 17 (554 aa).

Residues Asp306, Asp310, and Glu458 each coordinate Mg(2+). Positions 306–310 match the DDXXD motif motif; it reads DDTYD.

The protein belongs to the terpene synthase family. Tpsa subfamily. Requires Mg(2+) as cofactor. It depends on Mn(2+) as a cofactor.

It catalyses the reaction (2E,6E)-farnesyl diphosphate = (+)-valencene + diphosphate. The enzyme catalyses (2E,6E)-farnesyl diphosphate = (E)-beta-farnesene + diphosphate. It carries out the reaction (2E,6E)-farnesyl diphosphate = gamma-gurjunene + diphosphate. The catalysed reaction is (2Z,6Z)-farnesyl diphosphate = beta-bisabolene + diphosphate. It catalyses the reaction (2Z,6Z)-farnesyl diphosphate = (E)-gamma-bisabolene + diphosphate. The enzyme catalyses (2E)-geranyl diphosphate = limonene + diphosphate. It carries out the reaction (2E)-geranyl diphosphate = beta-myrcene + diphosphate. The catalysed reaction is (2E)-geranyl diphosphate = (E)-beta-ocimene + diphosphate. It catalyses the reaction (2E)-geranyl diphosphate = terpinolene + diphosphate. The enzyme catalyses (2E)-geranyl diphosphate = gamma-terpinene + diphosphate. It carries out the reaction (2Z,6Z)-farnesyl diphosphate = (Z)-gamma-bisabolene + diphosphate. The catalysed reaction is (2E,6E)-farnesyl diphosphate = (1S,5S,6R)-alpha-bergamotene + diphosphate. It catalyses the reaction (2Z,6Z)-farnesyl diphosphate = (1S,5S,6S)-alpha-bergamotene + diphosphate. Its pathway is secondary metabolite biosynthesis; terpenoid biosynthesis. In terms of biological role, sesquiterpene synthase involved in the biosynthesis of volatile compounds. Mediates the conversion of (2E,6E)-farnesyl diphosphate (FPP) into gamma-gurjunene, (E)-beta-farnesene and (+)-valencene, and of (2Z,6Z)-farnesyl diphosphate ((ZZ)-FPP) into (E)-alpha-bergamotene and (Z)-gamma-bisabolene as well as beta-bisabolene, (Z)-alpha-bergamotene and (E)-gamma-bisabolene to a lower extent. Can act with a low efficiency as a monoterpene synthase with geranyl diphosphate (GPP) as substrate, thus producing beta-myrcene, (E)-beta-ocimene, limonene, terpinolene, gamma-terpinene and (Z)-beta-ocimene. This Solanum habrochaites (Wild tomato) protein is Terpene synthase 17.